Consider the following 147-residue polypeptide: Small ribosomal subunit protein uS5 (147 aa).

The S5 DRBM domain occupies 9–72 (FEEVIVDIGR…DDAFKNIIHV (64 aa)).

Belongs to the universal ribosomal protein uS5 family. Part of the 30S ribosomal subunit. Contacts proteins S4 and S8.

Functionally, with S4 and S12 plays an important role in translational accuracy. Located at the back of the 30S subunit body where it stabilizes the conformation of the head with respect to the body. This chain is Small ribosomal subunit protein uS5, found in Campylobacter curvus (strain 525.92).